The chain runs to 409 residues: MAIAAPLKEKTVQKPGTTVYPILIIIGICHMLNDSLQAVIPAMFPILERSMSLTFTQLGIIAFTLNMVSSVMQPVVGWYTDKRPRPYALPVGLTASMLGILGLAFAPSFITILCCVFFIGLGSAIFHPEGSRVAYMAAGTKRGLAQSIYQVGGNSGQAMAPLITALILVPLGQFGAVWFTLVAALAVMFLMYIAKWYASRLGSLAQKSGKQKKTAENTAITKSVVSALIIIIFLIFARSWYTSAIGNFYTFYAMDTYHVSIQQAQSYIFVFLLFGAIGTFLGGPLADRFGKRFVILGSLLCSAPLAIVLPFAGPVLAYGVLALIGLVLMSSFSVTVVYAQELVPGKIGTMSGLTVGLAFGMGAIGAVALGALIDAAGLTPTMIAIAFLPVLGILAFLLPSDQKLREWHS.

Helical transmembrane passes span 22–42, 58–78, 99–119, 174–194, 217–237, 266–286, 293–312, 316–338, 353–373, and 378–398; these read ILII…VIPA, LGII…VVGW, GILG…VFFI, FGAV…MYIA, NTAI…LIFA, SYIF…GPLA, FVIL…LPFA, LAYG…TVVY, LTVG…GALI, and LTPT…AFLL.

This sequence belongs to the major facilitator superfamily.

The protein localises to the cell membrane. This is an uncharacterized protein from Bacillus subtilis (strain 168).